A 95-amino-acid polypeptide reads, in one-letter code: Large ribosomal subunit protein uL23 (95 aa).

The protein belongs to the universal ribosomal protein uL23 family. As to quaternary structure, part of the 50S ribosomal subunit. Contacts protein L29, and trigger factor when it is bound to the ribosome.

Functionally, one of the early assembly proteins it binds 23S rRNA. One of the proteins that surrounds the polypeptide exit tunnel on the outside of the ribosome. Forms the main docking site for trigger factor binding to the ribosome. The protein is Large ribosomal subunit protein uL23 of Coxiella burnetii (strain CbuK_Q154) (Coxiella burnetii (strain Q154)).